We begin with the raw amino-acid sequence, 90 residues long: ATP synthase subunit c (90 aa).

The next 2 helical transmembrane spans lie at 4-24 and 53-73; these read FVYS…GCGI and IGLA…LILI.

Belongs to the ATPase C chain family. As to quaternary structure, F-type ATPases have 2 components, F(1) - the catalytic core - and F(0) - the membrane proton channel. F(1) has five subunits: alpha(3), beta(3), gamma(1), delta(1), epsilon(1). F(0) has three main subunits: a(1), b(2) and c(10-14). The alpha and beta chains form an alternating ring which encloses part of the gamma chain. F(1) is attached to F(0) by a central stalk formed by the gamma and epsilon chains, while a peripheral stalk is formed by the delta and b chains.

It localises to the cell inner membrane. F(1)F(0) ATP synthase produces ATP from ADP in the presence of a proton or sodium gradient. F-type ATPases consist of two structural domains, F(1) containing the extramembraneous catalytic core and F(0) containing the membrane proton channel, linked together by a central stalk and a peripheral stalk. During catalysis, ATP synthesis in the catalytic domain of F(1) is coupled via a rotary mechanism of the central stalk subunits to proton translocation. Its function is as follows. Key component of the F(0) channel; it plays a direct role in translocation across the membrane. A homomeric c-ring of between 10-14 subunits forms the central stalk rotor element with the F(1) delta and epsilon subunits. The chain is ATP synthase subunit c from Syntrophobacter fumaroxidans (strain DSM 10017 / MPOB).